A 438-amino-acid chain; its full sequence is 23S rRNA (uracil(1939)-C(5))-methyltransferase RlmD (438 aa).

The TRAM domain maps to 13 to 71; sequence KAPLGPMQTYLVEGLTHEAKGVARLNGKVTFIEGALPGETVTAQVNKPGRRFDEAVLNA. [4Fe-4S] cluster is bound by residues Cys-84, Cys-90, Cys-93, and Cys-167. Gln-271, Phe-300, Asn-305, Glu-321, Asp-348, and Asp-368 together coordinate S-adenosyl-L-methionine. The Nucleophile role is filled by Cys-394.

Belongs to the class I-like SAM-binding methyltransferase superfamily. RNA M5U methyltransferase family. RlmD subfamily.

The enzyme catalyses uridine(1939) in 23S rRNA + S-adenosyl-L-methionine = 5-methyluridine(1939) in 23S rRNA + S-adenosyl-L-homocysteine + H(+). Its function is as follows. Catalyzes the formation of 5-methyl-uridine at position 1939 (m5U1939) in 23S rRNA. This Marinomonas posidonica (strain CECT 7376 / NCIMB 14433 / IVIA-Po-181) protein is 23S rRNA (uracil(1939)-C(5))-methyltransferase RlmD.